We begin with the raw amino-acid sequence, 579 residues long: Acetolactate synthase (579 aa).

Residue E61 participates in thiamine diphosphate binding. Residues R163, 274–295, and 317–336 contribute to the FAD site; these read HGTA…VGVR and DIDP…IVGD. The thiamine pyrophosphate binding stretch occupies residues 408–487; sequence QHQMWAGQFV…VKVIILNNGW (80 aa). Mg(2+) contacts are provided by D458 and N485.

The protein belongs to the TPP enzyme family. It depends on Mg(2+) as a cofactor. Thiamine diphosphate is required as a cofactor.

It carries out the reaction 2 pyruvate + H(+) = (2S)-2-acetolactate + CO2. Its pathway is amino-acid biosynthesis; L-isoleucine biosynthesis; L-isoleucine from 2-oxobutanoate: step 1/4. It participates in amino-acid biosynthesis; L-valine biosynthesis; L-valine from pyruvate: step 1/4. This chain is Acetolactate synthase (ilvY), found in Arthrospira platensis (Spirulina platensis).